Here is a 204-residue protein sequence, read N- to C-terminus: dITP/XTP pyrophosphatase (204 aa).

Thr8 to Lys13 serves as a coordination point for substrate. The active-site Proton acceptor is Asp70. Asp70 is a binding site for Mg(2+). Substrate contacts are provided by residues Ser71, Phe153–Asp156, Lys176, and His181–Arg182.

This sequence belongs to the HAM1 NTPase family. As to quaternary structure, homodimer. Mg(2+) serves as cofactor.

It catalyses the reaction XTP + H2O = XMP + diphosphate + H(+). The enzyme catalyses dITP + H2O = dIMP + diphosphate + H(+). The catalysed reaction is ITP + H2O = IMP + diphosphate + H(+). In terms of biological role, pyrophosphatase that catalyzes the hydrolysis of nucleoside triphosphates to their monophosphate derivatives, with a high preference for the non-canonical purine nucleotides XTP (xanthosine triphosphate), dITP (deoxyinosine triphosphate) and ITP. Seems to function as a house-cleaning enzyme that removes non-canonical purine nucleotides from the nucleotide pool, thus preventing their incorporation into DNA/RNA and avoiding chromosomal lesions. This Geobacillus kaustophilus (strain HTA426) protein is dITP/XTP pyrophosphatase.